Reading from the N-terminus, the 447-residue chain is N-succinylarginine dihydrolase (447 aa).

Substrate contacts are provided by residues 19-28 (AGLSFGNEAS), asparagine 110, and 137-138 (HR). Glutamate 174 is an active-site residue. A substrate-binding site is contributed by arginine 212. Histidine 248 is a catalytic residue. The substrate site is built by aspartate 250 and asparagine 359. Catalysis depends on cysteine 365, which acts as the Nucleophile.

Belongs to the succinylarginine dihydrolase family. In terms of assembly, homodimer.

It carries out the reaction N(2)-succinyl-L-arginine + 2 H2O + 2 H(+) = N(2)-succinyl-L-ornithine + 2 NH4(+) + CO2. Its pathway is amino-acid degradation; L-arginine degradation via AST pathway; L-glutamate and succinate from L-arginine: step 2/5. Its function is as follows. Catalyzes the hydrolysis of N(2)-succinylarginine into N(2)-succinylornithine, ammonia and CO(2). The chain is N-succinylarginine dihydrolase from Escherichia fergusonii (strain ATCC 35469 / DSM 13698 / CCUG 18766 / IAM 14443 / JCM 21226 / LMG 7866 / NBRC 102419 / NCTC 12128 / CDC 0568-73).